The chain runs to 208 residues: Methyl-CpG-binding domain protein 3-like 4 (208 aa).

Belongs to the MBD3L family.

The protein is Methyl-CpG-binding domain protein 3-like 4 (MBD3L4) of Homo sapiens (Human).